A 329-amino-acid chain; its full sequence is Sulfate-binding protein (329 aa).

The first 19 residues, 1–19 (MNKWGVGLTFLLAATSVMA), serve as a signal peptide directing secretion.

Belongs to the prokaryotic sulfate-binding protein family.

The protein localises to the periplasm. In terms of biological role, this protein specifically binds sulfate and is involved in its transmembrane transport. This chain is Sulfate-binding protein (sbp), found in Escherichia coli (strain K12).